Reading from the N-terminus, the 231-residue chain is 7-cyano-7-deazaguanine synthase (231 aa).

ATP is bound at residue 8–18; it reads FSGGQDSTTCL. Zn(2+)-binding residues include Cys-188, Cys-197, Cys-200, and Cys-203.

Belongs to the QueC family. Zn(2+) is required as a cofactor.

It catalyses the reaction 7-carboxy-7-deazaguanine + NH4(+) + ATP = 7-cyano-7-deazaguanine + ADP + phosphate + H2O + H(+). It functions in the pathway purine metabolism; 7-cyano-7-deazaguanine biosynthesis. Functionally, catalyzes the ATP-dependent conversion of 7-carboxy-7-deazaguanine (CDG) to 7-cyano-7-deazaguanine (preQ(0)). The chain is 7-cyano-7-deazaguanine synthase from Cronobacter sakazakii (strain ATCC BAA-894) (Enterobacter sakazakii).